We begin with the raw amino-acid sequence, 722 residues long: Dynein axonemal intermediate chain 7 (722 aa).

Residues 1-15 (MGPKAKKSGSKKKKV) show a composition bias toward basic residues. The tract at residues 1 to 20 (MGPKAKKSGSKKKKVTKAER) is disordered.

This sequence belongs to the DNAI7 family. In terms of assembly, part of the multisubunit axonemal dynein complex formed at least of two heavy chains and a number of intermediate and light chains. Associates with tubulin. Interacts with microtubule. Post-translationally, ubiquitinated. Ubiquitination leads to its degradation through the 26S proteasome. Ubiquitin-proteasome-mediated DNAI7 degradation occurs in mitosis.

The protein localises to the cell projection. Its subcellular location is the cilium. It localises to the cytoplasm. In terms of biological role, via its association with the multisubunit axonemal dynein complex, is potentially involved in the regulation of cilia function. May act as a cell cycle regulator. The polypeptide is Dynein axonemal intermediate chain 7 (Macaca fascicularis (Crab-eating macaque)).